Here is a 309-residue protein sequence, read N- to C-terminus: Sulfate adenylyltransferase subunit 2 (309 aa).

Belongs to the PAPS reductase family. CysD subfamily. In terms of assembly, heterodimer composed of CysD, the smaller subunit, and CysN.

It catalyses the reaction sulfate + ATP + H(+) = adenosine 5'-phosphosulfate + diphosphate. It functions in the pathway sulfur metabolism; hydrogen sulfide biosynthesis; sulfite from sulfate: step 1/3. Its function is as follows. With CysN forms the ATP sulfurylase (ATPS) that catalyzes the adenylation of sulfate producing adenosine 5'-phosphosulfate (APS) and diphosphate, the first enzymatic step in sulfur assimilation pathway. APS synthesis involves the formation of a high-energy phosphoric-sulfuric acid anhydride bond driven by GTP hydrolysis by CysN coupled to ATP hydrolysis by CysD. The polypeptide is Sulfate adenylyltransferase subunit 2 (Mycolicibacterium gilvum (strain PYR-GCK) (Mycobacterium gilvum (strain PYR-GCK))).